The sequence spans 41 residues: Large ribosomal subunit protein bL36 (41 aa).

It belongs to the bacterial ribosomal protein bL36 family.

The chain is Large ribosomal subunit protein bL36 from Rickettsia prowazekii (strain Madrid E).